Reading from the N-terminus, the 365-residue chain is Validamycin A dioxygenase (365 aa).

The 111-residue stretch at 174–284 (HATWTQSVNW…LVSLVYFFDA (111 aa)) folds into the Fe2OG dioxygenase domain. H203, D205, and H261 together coordinate Fe cation. The segment at 331–365 (GELSLSRPGSADSPGSSPADDHPSRPGRHPAQGPQ) is disordered. Residues 336 to 348 (SRPGSADSPGSSP) are compositionally biased toward low complexity.

This sequence belongs to the iron/ascorbate-dependent oxidoreductase family. Requires Fe(2+) as cofactor.

It catalyses the reaction validamycin A + 2-oxoglutarate + O2 = validamycin B + succinate + CO2 + H(+). It carries out the reaction validoxylamine A + 2-oxoglutarate + O2 = validoxylamine B + succinate + CO2 + H(+). It functions in the pathway antibiotic biosynthesis. Functionally, involved in the biosynthesis of validamycin B, a component of the antifungal and antibiotic validamycin complex used as a crop protectant. Catalyzes the regioselective hydroxylation of validamycin A (4-O-beta-D-glucopyranosyl-validoxylamine A) at the C-6 position to yield validamycin B. To a lesser extent, also able to convert validoxylamine A to its hydroxylated derivative. The polypeptide is Validamycin A dioxygenase (Streptomyces hygroscopicus subsp. limoneus).